Here is a 450-residue protein sequence, read N- to C-terminus: Large terminase protein homolog UL15b (450 aa).

This sequence belongs to the herpesviridae large terminase family.

The polypeptide is Large terminase protein homolog UL15b (UL15b) (Psittacid herpesvirus 1 (isolate Amazon parrot/-/97-0001/1997) (PsHV-1)).